Reading from the N-terminus, the 274-residue chain is Large ribosomal subunit protein uL2cz/uL2cy (274 aa).

Disordered regions lie at residues methionine 1–asparagine 25 and asparagine 224–lysine 274.

It belongs to the universal ribosomal protein uL2 family. As to quaternary structure, part of the 50S ribosomal subunit.

The protein resides in the plastid. It is found in the chloroplast. This is Large ribosomal subunit protein uL2cz/uL2cy (rpl2-A) from Aethionema cordifolium (Lebanon stonecress).